We begin with the raw amino-acid sequence, 198 residues long: Nucleoside triphosphate pyrophosphatase (198 aa).

The active-site Proton acceptor is aspartate 72.

The protein belongs to the Maf family. A divalent metal cation is required as a cofactor.

It localises to the cytoplasm. The catalysed reaction is a ribonucleoside 5'-triphosphate + H2O = a ribonucleoside 5'-phosphate + diphosphate + H(+). It carries out the reaction a 2'-deoxyribonucleoside 5'-triphosphate + H2O = a 2'-deoxyribonucleoside 5'-phosphate + diphosphate + H(+). Nucleoside triphosphate pyrophosphatase. May have a dual role in cell division arrest and in preventing the incorporation of modified nucleotides into cellular nucleic acids. The polypeptide is Nucleoside triphosphate pyrophosphatase (Corynebacterium diphtheriae (strain ATCC 700971 / NCTC 13129 / Biotype gravis)).